Reading from the N-terminus, the 182-residue chain is uncharacterized protein (182 aa).

This is an uncharacterized protein from Haemophilus influenzae (strain ATCC 51907 / DSM 11121 / KW20 / Rd).